Here is a 178-residue protein sequence, read N- to C-terminus: Acireductone dioxygenase (178 aa).

Positions 82, 84, 88, and 127 each coordinate Fe(2+). Residues histidine 82, histidine 84, glutamate 88, and histidine 127 each contribute to the Ni(2+) site. At serine 157 the chain carries Phosphoserine.

The protein belongs to the acireductone dioxygenase (ARD) family. Fe(2+) serves as cofactor. Requires Ni(2+) as cofactor.

It localises to the cytoplasm. The protein resides in the nucleus. The catalysed reaction is 1,2-dihydroxy-5-(methylsulfanyl)pent-1-en-3-one + O2 = 4-methylsulfanyl-2-oxobutanoate + formate + 2 H(+). The enzyme catalyses 1,2-dihydroxy-5-(methylsulfanyl)pent-1-en-3-one + O2 = 3-(methylsulfanyl)propanoate + CO + formate + 2 H(+). It functions in the pathway amino-acid biosynthesis; L-methionine biosynthesis via salvage pathway; L-methionine from S-methyl-5-thio-alpha-D-ribose 1-phosphate: step 5/6. Functionally, catalyzes 2 different reactions between oxygen and the acireductone 1,2-dihydroxy-3-keto-5-methylthiopentene (DHK-MTPene) depending upon the metal bound in the active site. Fe-containing acireductone dioxygenase (Fe-ARD) produces formate and 2-keto-4-methylthiobutyrate (KMTB), the alpha-ketoacid precursor of methionine in the methionine recycle pathway. Ni-containing acireductone dioxygenase (Ni-ARD) produces methylthiopropionate, carbon monoxide and formate, and does not lie on the methionine recycle pathway. This chain is Acireductone dioxygenase (adi1), found in Schizosaccharomyces pombe (strain 972 / ATCC 24843) (Fission yeast).